An 892-amino-acid chain; its full sequence is Alanine--tRNA ligase (892 aa).

Positions 594, 598, 702, and 706 each coordinate Zn(2+).

Belongs to the class-II aminoacyl-tRNA synthetase family. Zn(2+) is required as a cofactor.

It is found in the cytoplasm. It catalyses the reaction tRNA(Ala) + L-alanine + ATP = L-alanyl-tRNA(Ala) + AMP + diphosphate. Functionally, catalyzes the attachment of alanine to tRNA(Ala) in a two-step reaction: alanine is first activated by ATP to form Ala-AMP and then transferred to the acceptor end of tRNA(Ala). Also edits incorrectly charged Ser-tRNA(Ala) and Gly-tRNA(Ala) via its editing domain. In Pyrobaculum neutrophilum (strain DSM 2338 / JCM 9278 / NBRC 100436 / V24Sta) (Thermoproteus neutrophilus), this protein is Alanine--tRNA ligase.